A 268-amino-acid polypeptide reads, in one-letter code: Helix-loop-helix protein 25 (268 aa).

Positions 1-23 are enriched in polar residues; sequence MPKVIQSSMSDYRSVPYNQTPKS. The segment at 1 to 29 is disordered; sequence MPKVIQSSMSDYRSVPYNQTPKSASERKR. Residues 92-105 are basic motif; it reads ERRKVKTEREKIRR. A bHLH domain is found at 92–149; the sequence is ERRKVKTEREKIRRKKQDDCYAELKFFILNKQMGSYEQRLKLERITILEIIIDYIKHN. Positions 106–149 are helix-loop-helix motif; it reads KKQDDCYAELKFFILNKQMGSYEQRLKLERITILEIIIDYIKHN.

Its subcellular location is the nucleus. Functionally, probable transcription factor. Modulates lifespan and also recovery from the developmentally arrested larval state known as dauer, perhaps acting upstream of phosphatase PTEN/daf-18. Regulates expression of genes involved in cell division, cell-cycle regulation, and sexual reproduction, including daf-18. In Caenorhabditis elegans, this protein is Helix-loop-helix protein 25.